We begin with the raw amino-acid sequence, 574 residues long: Ankyrin repeat protein B19 (574 aa).

ANK repeat units lie at residues 56 to 87 (TGYT…DVTM), 135 to 164 (IKSR…DPNF), 167 to 213 (DGYT…NLNA), 217 to 249 (CGNT…NFEI), 253 to 285 (HGLT…NVGE), and 327 to 356 (EGKT…DINA). The region spanning 541 to 574 (NCLLTLLPSEIIYEILYMLTINDLYNISYPPTKV) is the F-box domain.

It belongs to the poxvirinae B18 protein family.

The chain is Ankyrin repeat protein B19 from Vaccinia virus (strain Western Reserve) (VACV).